Reading from the N-terminus, the 320-residue chain is MGRIPCCEKENVKRGQWTPEEDNKLASYIAQHGTRNWRLIPKNAGLQRCGKSCRLRWTNYLRPDLKHGQFSEAEEHIIVKFHSVLGNRWSLIAAQLPGRTDNDVKNYWNTKLKKKLSGMGIDPVTHKPFSHLMAEITTTLNPPQVSHLAEAALGCFKDEMLHLLTKKRVDLNQINFSNHNPNPNNFHEIADNEAGKIKMDGLDHGNGIMKLWDMGNGFSYGSSSSSFGNEERNDGSASPAVAAWRGHGGIRTAVAETAAAEEEERRKLKGEVVDQEEIGSEGGRGDGMTMMRNHHHHQHVFNVDNVLWDLQADDLINHMV.

HTH myb-type domains are found at residues 9–65 and 66–116; these read KENV…RPDL and KHGQ…KKKL. 2 consecutive DNA-binding regions (H-T-H motif) follow at residues 37-61 and 89-112; these read WRLI…TNYL and WSLI…NTKL. Residues 257–283 form a disordered region; the sequence is TAAAEEEERRKLKGEVVDQEEIGSEGG. Positions 263-272 are enriched in basic and acidic residues; that stretch reads EERRKLKGEV.

As to expression, expressed in the tapetum and middle layer of developing anthers. Expressed in trichomes.

It is found in the nucleus. Functionally, transcription factor that binds to the DNA sequence 5'-CCAACC-3'. Regulates directly PME5, UND and GLOX1. Essential for tapetum development in anthers and microsporogenesis. Regulates the timing of tapetal programmed cell death (PCD) which is critical for pollen development. May act through the activation of UND, encoding an A1 aspartic protease. Required for anther development by regulating tapetum development, callose dissolution and exine formation. Acts upstream of A6 and FAR2/MS2, two genes required for pollen exine formation. Negatively regulates trichome endoreduplication and trichome branching. The polypeptide is Transcription factor MYB80 (Arabidopsis thaliana (Mouse-ear cress)).